The chain runs to 173 residues: Gamma-crystallin S-1 (173 aa).

Beta/gamma crystallin 'Greek key' domains follow at residues 2-40 (GKIIFYEDRNFQGRHYECSSDCADLSPYFSRCNSIRVES) and 41-83 (DWWV…RMLP). The interval 84–88 (HTGRS) is connecting peptide. Beta/gamma crystallin 'Greek key' domains follow at residues 89-129 (YRMR…QVMD) and 130-172 (GYWI…RRIM).

This sequence belongs to the beta/gamma-crystallin family.

Functionally, crystallins are the dominant structural components of the vertebrate eye lens. In Chiloscyllium indicum (Slender bamboo shark), this protein is Gamma-crystallin S-1 (GS-1).